Reading from the N-terminus, the 193-residue chain is PBAN-type neuropeptides (193 aa).

Positions 1-19 (MYGAVLPGLFFIFISCVVA) are cleaved as a signal peptide. Ile46 carries the isoleucine amide modification. Residues Leu102 and Leu122 each carry the leucine amide modification. Residues 124–158 (RRLADDTPATPADQEMYRPDPEQIDSRTKYFSPRL) are disordered. A compositionally biased stretch (basic and acidic residues) spans 138 to 151 (EMYRPDPEQIDSRT). 2 positions are modified to leucine amide: Leu158 and Leu168. Positions 186 to 193 (STNKTQST) are excised as a propeptide.

The protein belongs to the pyrokinin family. As to expression, expressed in the mandibular, maxillary and labial neuromeres of the male and female brain-subesophageal ganglions, in the corpora cardiaca and all around the corpora allata, and at a lower level in the brain near the calyx and pedunculus of the mushroom body (at protein level). Expressed in larvae and adult of both sexes (at protein level). Expressed in corpora cardiaca (CC), corpora allata (CA) and gnathal ganglion (GNG) (at protein level). Expression in CC and CA detected in most animals, in GNG in some (at protein level). In terms of tissue distribution, expression not detected in CC, CA, AL or GNG (at protein level). As to expression, expressed in corpora cardiaca (CC), corpora allata (CA), antennal lobe (AL) and gnathal ganglion (GNG) (at protein level). Expression in CC, CA and GNG detected in most animals, expression in AL detected in few (at protein level). Expressed in corpora cardiaca (CC), corpora allata (CA), antennal lobe (AL) and gnathal ganglion (GNG) (at protein level). Expression in CC, CA and GNG detected in all animals, expression in AL detected in some (at protein level). In terms of tissue distribution, expressed in corpora cardiaca (CC), corpora allata (CA), antennal lobe (AL) and gnathal ganglion (GNG) (at protein level). Expression in CC, CA and GNG detected in most animals, expression in AL detected in some animals (at protein level).

It is found in the secreted. In terms of biological role, a hormone that controls sex pheromone production in female moths and pheromone responsiveness in male. The sequence is that of PBAN-type neuropeptides from Agrotis ipsilon (Black cutworm moth).